The chain runs to 465 residues: Glucose-1-phosphate adenylyltransferase (465 aa).

Alpha-D-glucose 1-phosphate is bound by residues Gly164, 181 to 182 (EK), and Ser199.

The protein belongs to the bacterial/plant glucose-1-phosphate adenylyltransferase family. As to quaternary structure, homotetramer.

The catalysed reaction is alpha-D-glucose 1-phosphate + ATP + H(+) = ADP-alpha-D-glucose + diphosphate. Its pathway is glycan biosynthesis; glycogen biosynthesis. Functionally, involved in the biosynthesis of ADP-glucose, a building block required for the elongation reactions to produce glycogen. Catalyzes the reaction between ATP and alpha-D-glucose 1-phosphate (G1P) to produce pyrophosphate and ADP-Glc. This Arthrobacter sp. (strain FB24) protein is Glucose-1-phosphate adenylyltransferase.